A 521-amino-acid chain; its full sequence is Cytochrome P450 monooxygenase gloO (521 aa).

A signal peptide spans 1–26; that stretch reads MIAALFTTNLQLGAVGVFIFALLAFA. Position 464 (Cys-464) interacts with heme.

Belongs to the cytochrome P450 family. Heme is required as a cofactor.

The protein operates within mycotoxin biosynthesis. Functionally, cytochrome P450 monooxygenase; part of the gene cluster that mediates the biosynthesis of pneumocandins, lipohexapeptides of the echinocandin family that prevent fungal cell wall formation by non-competitive inhibition of beta-1,3-glucan synthase. The 10,12-dimethylmyristoyl side chain is synthesized by the reducing polyketide synthase gloL/GLPKS4. The thioesterase gloN/GLHYD exclusively interacts with gloL/GLPKS4 to maintain turnover of the polyketide side chain. The 10R,12S-dimethylmyristic acid is then transferred to the first thiolation domain of the nonribosomal peptide synthetase gloA/GLNRPS4 by the acyl-AMP ligase gloD/GLligase, followed by its acylation to L-ornithine to trigger elongation of the cyclic hexapeptide. L-ornithine, 4R-hydroxyl-L-proline (generated from L-proline by the dioxygenase gloF/GLOXY2), 3S-hydroxyl-L-homotyrosine (generated by gloG/GLHtyB, gloH/GLHtyA, gloI/GLHtyC, gloJ/GLHtyD and hydroxylated at C-3 by the dioxygenase gloM/GLOXY1), 3R-hydroxyl-L-glutamine (generated from L-glutamine probably by the dioxygenase gloE/GLOXY3) and 3S-hydroxyl-L-proline (generated from L-proline by the dioxygenase gloF/GLOXY2 to yield pneumocandin B0), or 3S-hydroxyl-4S-methyl-L-proline (generated from L-leucine by the dioxygenase gloC/GLOXY4 to yield pneumocandin A0) are sequentially added to the growing chain. The last C domain of gloA/GLNRPS4 is proposed to be responsible for cyclization by condensation to form the peptide bond between L-ornithine and 3S-hydroxyl-4S-methyl-L-proline (for pneumocandin A0) or 3S-hydroxyl-L-proline (for pneumocandin B0). Finally, the subsequent C-4 hydroxylation of 3S-hydroxyl-L-homotyrosine and L-ornithine dihydroxylation at C-4 and C-5 are performed by the cytochrome P450 monooxygenases gloP/GLP450-1 and gloO/GLP450-2, respectively. The sequence is that of Cytochrome P450 monooxygenase gloO from Glarea lozoyensis (strain ATCC 20868 / MF5171).